Reading from the N-terminus, the 291-residue chain is ATP synthase gamma chain (291 aa).

It belongs to the ATPase gamma chain family. F-type ATPases have 2 components, CF(1) - the catalytic core - and CF(0) - the membrane proton channel. CF(1) has five subunits: alpha(3), beta(3), gamma(1), delta(1), epsilon(1). CF(0) has three main subunits: a, b and c.

Its subcellular location is the cell inner membrane. Its function is as follows. Produces ATP from ADP in the presence of a proton gradient across the membrane. The gamma chain is believed to be important in regulating ATPase activity and the flow of protons through the CF(0) complex. The protein is ATP synthase gamma chain of Neisseria meningitidis serogroup A / serotype 4A (strain DSM 15465 / Z2491).